Consider the following 254-residue polypeptide: Ribosomal RNA small subunit methyltransferase J (254 aa).

Residues 101–102, 117–118, 153–154, and Asp-171 contribute to the S-adenosyl-L-methionine site; these read RD, ER, and SS.

This sequence belongs to the methyltransferase superfamily. RsmJ family.

The protein localises to the cytoplasm. It carries out the reaction guanosine(1516) in 16S rRNA + S-adenosyl-L-methionine = N(2)-methylguanosine(1516) in 16S rRNA + S-adenosyl-L-homocysteine + H(+). In terms of biological role, specifically methylates the guanosine in position 1516 of 16S rRNA. This Enterobacter sp. (strain 638) protein is Ribosomal RNA small subunit methyltransferase J.